A 942-amino-acid chain; its full sequence is Diacylglycerol kinase theta (942 aa).

Positions 1–59 are disordered; it reads MAAAAEPGARAWLGGGSPRPGSPACSPVLGSGGRARPGPGPGPGPERAGVRAPGPAAAP. Residues Ser-22 and Ser-26 each carry the phosphoserine modification. A compositionally biased stretch (low complexity) spans 45–59; the sequence is PERAGVRAPGPAAAP. 3 Phorbol-ester/DAG-type zinc fingers span residues 60 to 108, 121 to 168, and 183 to 234; these read GHSF…RIPC, AHCF…CSDC, and HHHW…APEC. Residues 269–295 are disordered; the sequence is EPGEGGDGADGSAAVGPGRETQATPES. The 100-residue stretch at 395-494 folds into the Ras-associating domain; that stretch reads AQEVLKIYPG…TRFYVAESRD (100 aa). 2 consecutive short sequence motifs (LXXLL motif) follow at residues 555-559 and 574-578; these read LYMLL and LPDLL. A DAGKc domain is found at 584-721; it reads PDSCPLLVFV…MDRWTILLDA (138 aa). The disordered stretch occupies residues 908 to 942; the sequence is PKVHMLRKAKQKPRRAGTTRDARADAAPAPESDPR. Positions 911 to 924 are enriched in basic residues; it reads HMLRKAKQKPRRAG. A compositionally biased stretch (low complexity) spans 932–942; sequence DAAPAPESDPR.

The protein belongs to the eukaryotic diacylglycerol kinase family. In terms of assembly, interacts with RHOA (constitutively activated, GTP-bound); the interaction inhibits DGKQ. Interacts with PRKCE. Interacts with PRKCH. Interacts with PLCB1. Interacts with NR5A1; the interaction requires both LXXLL motifs in DGKQ and is required for full phosphatidic acid-mediated activation of NR5A1. In terms of processing, phosphorylated by PRKCE and PRKCH in vitro.

It localises to the cytoplasm. Its subcellular location is the cytosol. It is found in the cell membrane. The protein resides in the synapse. The protein localises to the cytoskeleton. It localises to the nucleus. Its subcellular location is the nucleus speckle. It is found in the nucleus matrix. The catalysed reaction is a 1,2-diacyl-sn-glycerol + ATP = a 1,2-diacyl-sn-glycero-3-phosphate + ADP + H(+). The enzyme catalyses a 1-O-alkyl-sn-glycerol + ATP = a 1-O-alkyl-sn-glycero-3-phosphate + ADP + H(+). It carries out the reaction 1-O-alkyl-2-acyl-sn-glycerol + ATP = 1-O-alkyl-2-acyl-sn-glycero-3-phosphate + ADP + H(+). It catalyses the reaction 1,2-di-(9Z-octadecenoyl)-sn-glycerol + ATP = 1,2-di-(9Z-octadecenoyl)-sn-glycero-3-phosphate + ADP + H(+). The catalysed reaction is 1-O-hexadecyl-sn-glycerol + ATP = 1-O-hexadecyl-sn-glycero-3-phosphate + ADP + H(+). The enzyme catalyses 1-O-hexadecyl-2-acetyl-sn-glycerol + ATP = 1-O-hexadecyl-2-acetyl-sn-glycero-3-phosphate + ADP + H(+). It carries out the reaction 1-octadecanoyl-2-(5Z,8Z,11Z,14Z-eicosatetraenoyl)-sn-glycerol + ATP = 1-octadecanoyl-2-(5Z,8Z,11Z,14Z-eicosatetraenoyl)-sn-glycero-3-phosphate + ADP + H(+). The protein operates within lipid metabolism; glycerolipid metabolism. With respect to regulation, activated by phosphatidylserine. In terms of biological role, diacylglycerol kinase that converts diacylglycerol/DAG into phosphatidic acid/phosphatidate/PA and regulates the respective levels of these two bioactive lipids. Thereby, acts as a central switch between the signaling pathways activated by these second messengers with different cellular targets and opposite effects in numerous biological processes. Within the adrenocorticotropic hormone signaling pathway, produces phosphatidic acid which in turn activates NR5A1 and subsequent steroidogenic gene transcription. Also functions downstream of the nerve growth factor signaling pathway being specifically activated in the nucleus by the growth factor. Through its diacylglycerol activity also regulates synaptic vesicle endocytosis. This chain is Diacylglycerol kinase theta, found in Homo sapiens (Human).